The chain runs to 479 residues: MSPQTETKASVGFKAGVKEYKLNYYTPEYETKDTDILAAFRVTPQPGVPPEEAGAAVAAESSTGTWTTVWTDGLTSLDRYKGRCYHIEPVPGEETQFIAYVAYPLDLFEEGSVTNMFTSIVGNVFGFKALAALRLEDLRIPPAYTKTFQGPPHGIQVERDKLNKYGRPLLGCTIKPKLGLSAKNYGRAVYECLRGGLDFTKDDENVNSQPFMRWRDRFLFCAEAIYKSQAETGEIKGHYLNATAGTCEEMMKRAIFARELGVPIVMHDYLTGGFTANTSLAHYCRDNGLLLHIHRAMHAVIDRQKNHGMHFRVLAKALRLSGGDHVHAGTVVGKLEGDRESTLGFVDLLRDDYVEKDRSRGIFFTQDWVSLPGVLPVASGGIHVWHMPALTEIFGDDSVLQFGGGTLGHPWGNAPGAVANRVALEACVQARNEGRDLAVEGNEIIREACKWSPELAAACEVWKEITFNFPTIDKLDGQD.

Residues 1-2 (MS) constitute a propeptide that is removed on maturation. Residues Asn123 and Thr173 each contribute to the substrate site. Lys175 acts as the Proton acceptor in catalysis. Lys177 lines the substrate pocket. Mg(2+) contacts are provided by Lys201, Asp203, and Glu204. At Lys201 the chain carries N6-carboxylysine. Position 208 is a phosphoserine (Ser208). His294 (proton acceptor) is an active-site residue. Substrate contacts are provided by Arg295 and His327. At Thr330 the chain carries Phosphothreonine. Ser379 is a substrate binding site.

It belongs to the RuBisCO large chain family. Type I subfamily. Heterohexadecamer of 8 large chains and 8 small chains; disulfide-linked. The disulfide link is formed within the large subunit homodimers. Mg(2+) is required as a cofactor. The disulfide bond which can form in the large chain dimeric partners within the hexadecamer appears to be associated with oxidative stress and protein turnover.

Its subcellular location is the plastid. It localises to the chloroplast. It carries out the reaction 2 (2R)-3-phosphoglycerate + 2 H(+) = D-ribulose 1,5-bisphosphate + CO2 + H2O. The enzyme catalyses D-ribulose 1,5-bisphosphate + O2 = 2-phosphoglycolate + (2R)-3-phosphoglycerate + 2 H(+). In terms of biological role, ruBisCO catalyzes two reactions: the carboxylation of D-ribulose 1,5-bisphosphate, the primary event in carbon dioxide fixation, as well as the oxidative fragmentation of the pentose substrate in the photorespiration process. Both reactions occur simultaneously and in competition at the same active site. The chain is Ribulose bisphosphate carboxylase large chain from Brassica oleracea (Wild cabbage).